The following is a 91-amino-acid chain: UPF0358 protein SAB0977 (91 aa).

Belongs to the UPF0358 family.

This chain is UPF0358 protein SAB0977, found in Staphylococcus aureus (strain bovine RF122 / ET3-1).